Here is a 78-residue protein sequence, read N- to C-terminus: Probable [Fe-S]-dependent transcriptional repressor (78 aa).

Residues Cys-56, Cys-61, Cys-64, and Cys-70 each coordinate iron-sulfur cluster.

Belongs to the FeoC family.

Its function is as follows. May function as a transcriptional regulator that controls feoABC expression. The sequence is that of Probable [Fe-S]-dependent transcriptional repressor from Salmonella heidelberg (strain SL476).